Consider the following 803-residue polypeptide: Myb-like protein V (803 aa).

Disordered regions lie at residues 237 to 333 and 429 to 803; these read SNIY…LPGL and KSTS…SRRK. The stretch at 258-323 forms a coiled coil; sequence DANDKNENNN…ENNKNKRTKS (66 aa). A compositionally biased stretch (acidic residues) spans 271 to 294; that stretch reads DDADDAAADDADDADDDDMDDESD. The segment covering 295–315 has biased composition (low complexity); sequence SNNNNKNSNNKNSNNKNSNEN. In terms of domain architecture, Myb-like spans 332–379; sequence GLWTDEECRSLIKAVMIIGHRWIKIKEDYYSTSKRKPSQLKDKMRSLR. Coiled coils occupy residues 400–429 and 463–496; these read EIEK…SNIK and NNED…NSAV. The span at 429-438 shows a compositional bias: polar residues; the sequence is KSTSNTSAAS. 2 stretches are compositionally biased toward acidic residues: residues 448 to 480 and 510 to 533; these read NDSD…DEND and EEEE…EENE. 2 stretches are compositionally biased toward basic residues: residues 537–553 and 568–577; these read KQKR…KKLK and HKSKLKSKPQ. A coiled-coil region spans residues 573 to 616; the sequence is KSKPQRKVEKEESEKEESEEEESEEEEEEDDEDYESEEDKKKKK. Residues 586-609 are compositionally biased toward acidic residues; sequence EKEESEEEESEEEEEEDDEDYESE. Low complexity-rich tracts occupy residues 625–636 and 666–733; these read TSTHTTTTTTTT and KKSN…PTKK. Residues 786–795 are compositionally biased toward basic and acidic residues; it reads LNKDSKENKK.

The chain is Myb-like protein V (mybV) from Dictyostelium discoideum (Social amoeba).